The chain runs to 396 residues: Tryptophan synthase beta chain (396 aa).

The residue at position 88 (Lys88) is an N6-(pyridoxal phosphate)lysine.

Belongs to the TrpB family. In terms of assembly, tetramer of two alpha and two beta chains. Requires pyridoxal 5'-phosphate as cofactor.

The catalysed reaction is (1S,2R)-1-C-(indol-3-yl)glycerol 3-phosphate + L-serine = D-glyceraldehyde 3-phosphate + L-tryptophan + H2O. It participates in amino-acid biosynthesis; L-tryptophan biosynthesis; L-tryptophan from chorismate: step 5/5. The beta subunit is responsible for the synthesis of L-tryptophan from indole and L-serine. In Shewanella putrefaciens (strain CN-32 / ATCC BAA-453), this protein is Tryptophan synthase beta chain.